The sequence spans 60 residues: Potassium channel toxin alpha-KTx 29.1 (60 aa).

A signal peptide spans 1–28; it reads MKSVCGVLIILVVLTTMLSISTFSTVGA. Disulfide bonds link cysteine 32–cysteine 51, cysteine 40–cysteine 56, and cysteine 44–cysteine 58.

The protein belongs to the short scorpion toxin superfamily. Potassium channel inhibitor family. Alpha-KTx 29 subfamily. As to expression, expressed by the venom gland.

The protein localises to the secreted. Its function is as follows. Weakly inhibits the Kv1.3/KCNA3 channel (1 uM of the toxin inhibits currents by 13.2%) and Kv7.1/KCNQ1 channel (10 uM of the toxin inhibits currents by 27.7%). The sequence is that of Potassium channel toxin alpha-KTx 29.1 from Lychas mucronatus (Chinese swimming scorpion).